The following is a 73-amino-acid chain: Putative membrane protein insertion efficiency factor (73 aa).

The protein belongs to the UPF0161 family.

Its subcellular location is the cell inner membrane. Its function is as follows. Could be involved in insertion of integral membrane proteins into the membrane. The chain is Putative membrane protein insertion efficiency factor from Parabacteroides distasonis (strain ATCC 8503 / DSM 20701 / CIP 104284 / JCM 5825 / NCTC 11152).